Reading from the N-terminus, the 267-residue chain is Thymidylate synthase (267 aa).

Arg-24 contacts dUMP. A (6R)-5,10-methylene-5,6,7,8-tetrahydrofolate-binding site is contributed by His-54. 129–130 (RR) contributes to the dUMP binding site. Cys-149 serves as the catalytic Nucleophile. DUMP-binding positions include 169 to 172 (RSAD), Asn-180, and 210 to 212 (HIY). (6R)-5,10-methylene-5,6,7,8-tetrahydrofolate is bound at residue Asp-172. (6R)-5,10-methylene-5,6,7,8-tetrahydrofolate is bound at residue Ala-266.

Belongs to the thymidylate synthase family. Bacterial-type ThyA subfamily. In terms of assembly, homodimer.

The protein localises to the cytoplasm. The catalysed reaction is dUMP + (6R)-5,10-methylene-5,6,7,8-tetrahydrofolate = 7,8-dihydrofolate + dTMP. Its pathway is pyrimidine metabolism; dTTP biosynthesis. Its function is as follows. Catalyzes the reductive methylation of 2'-deoxyuridine-5'-monophosphate (dUMP) to 2'-deoxythymidine-5'-monophosphate (dTMP) while utilizing 5,10-methylenetetrahydrofolate (mTHF) as the methyl donor and reductant in the reaction, yielding dihydrofolate (DHF) as a by-product. This enzymatic reaction provides an intracellular de novo source of dTMP, an essential precursor for DNA biosynthesis. This Arthrobacter sp. (strain FB24) protein is Thymidylate synthase.